Reading from the N-terminus, the 155-residue chain is Ribonuclease H (155 aa).

The 142-residue stretch at 1-142 folds into the RNase H type-1 domain; it reads MLKQVEIFTD…CDELARAAAS (142 aa). Mg(2+) is bound by residues Asp10, Glu48, Asp70, and Asp134.

Belongs to the RNase H family. As to quaternary structure, monomer. Mg(2+) serves as cofactor.

It is found in the cytoplasm. It carries out the reaction Endonucleolytic cleavage to 5'-phosphomonoester.. In terms of biological role, endonuclease that specifically degrades the RNA of RNA-DNA hybrids. In Klebsiella pneumoniae (strain 342), this protein is Ribonuclease H.